Here is a 218-residue protein sequence, read N- to C-terminus: GTP cyclohydrolase 1 (218 aa).

Residues Cys109, His112, and Cys180 each contribute to the Zn(2+) site.

This sequence belongs to the GTP cyclohydrolase I family. As to quaternary structure, toroid-shaped homodecamer, composed of two pentamers of five dimers.

It carries out the reaction GTP + H2O = 7,8-dihydroneopterin 3'-triphosphate + formate + H(+). The protein operates within cofactor biosynthesis; 7,8-dihydroneopterin triphosphate biosynthesis; 7,8-dihydroneopterin triphosphate from GTP: step 1/1. This Histophilus somni (strain 129Pt) (Haemophilus somnus) protein is GTP cyclohydrolase 1.